Consider the following 314-residue polypeptide: MPRTDNDSWTITESVGATALGVAAARAAETESENPLIEDPFARVFVDAAGDGMWSMFANPALLAGAPEIESQVGARVRQMIDFMATRTAFFDEFFLGAADAGVRQVVILASGLDSRAWRLPWPDGTVVYELDQPRVLEFKSATLRQHGARPTAQLMNIPIDLRQDWPAALLDSGFDASKPTAWSAEGLVRYLPARAQDLLFERIDTLSPAGSWLATNVPQGGFLDPDLVRRQHEEMQRMRAAAGRLVEIQMPAVEDLWYAEERTPVADWLGEHGWRASATTSAELLTRYGRPVPDDAEGPVPPTLFVSAHRPAA.

S-adenosyl-L-methionine is bound by residues Asp132 and 161-162; that span reads DL. The disordered stretch occupies residues 291 to 314; the sequence is RPVPDDAEGPVPPTLFVSAHRPAA.

It belongs to the UPF0677 family.

Its function is as follows. Exhibits S-adenosyl-L-methionine-dependent methyltransferase activity. This chain is Putative S-adenosyl-L-methionine-dependent methyltransferase MUL_4402, found in Mycobacterium ulcerans (strain Agy99).